The chain runs to 249 residues: NAD kinase (249 aa).

Aspartate 45 (proton acceptor) is an active-site residue. Residues 45 to 46 (DG), arginine 50, 110 to 111 (NE), aspartate 138, and 149 to 154 (SGWGMS) each bind NAD(+).

This sequence belongs to the NAD kinase family. The cofactor is a divalent metal cation.

It localises to the cytoplasm. The enzyme catalyses NAD(+) + ATP = ADP + NADP(+) + H(+). Involved in the regulation of the intracellular balance of NAD and NADP, and is a key enzyme in the biosynthesis of NADP. Catalyzes specifically the phosphorylation on 2'-hydroxyl of the adenosine moiety of NAD to yield NADP. The chain is NAD kinase from Saccharolobus solfataricus (strain ATCC 35092 / DSM 1617 / JCM 11322 / P2) (Sulfolobus solfataricus).